The sequence spans 320 residues: Cell division protein FtsQ (320 aa).

The segment at 1–24 (MAQTIKRGGKGVRRATAARSAQRK) is disordered. Residues 1–52 (MAQTIKRGGKGVRRATAARSAQRKVQTARQQTGSVLDSVLRWLPFSEETLHR) are Cytoplasmic-facing. Residues 53–73 (ILMTLILAAAAGLVWTVAVMA) form a helical membrane-spanning segment. Over 74–320 (GIPALVSEQA…RAASAKSDEG (247 aa)) the chain is Periplasmic. One can recognise a POTRA domain in the interval 92 to 160 (FKVSHLEVRG…DTLVIDIVER (69 aa)). Positions 296–320 (AAEKRAEEQARAEAKRAASAKSDEG) are disordered.

The protein belongs to the FtsQ/DivIB family. FtsQ subfamily.

Its subcellular location is the cell inner membrane. Functionally, essential cell division protein. The sequence is that of Cell division protein FtsQ from Novosphingobium aromaticivorans (strain ATCC 700278 / DSM 12444 / CCUG 56034 / CIP 105152 / NBRC 16084 / F199).